A 286-amino-acid chain; its full sequence is Formamidopyrimidine-DNA glycosylase (286 aa).

Proline 2 (schiff-base intermediate with DNA) is an active-site residue. The active-site Proton donor is the glutamate 3. Catalysis depends on lysine 60, which acts as the Proton donor; for beta-elimination activity. Positions 103, 122, and 167 each coordinate DNA. The FPG-type zinc finger occupies 252–286 (WVYRRNQKPCRKCGTLIEKTKVAGRSTHWCPNCQN). Arginine 276 (proton donor; for delta-elimination activity) is an active-site residue.

The protein belongs to the FPG family. As to quaternary structure, monomer. The cofactor is Zn(2+).

The catalysed reaction is Hydrolysis of DNA containing ring-opened 7-methylguanine residues, releasing 2,6-diamino-4-hydroxy-5-(N-methyl)formamidopyrimidine.. It carries out the reaction 2'-deoxyribonucleotide-(2'-deoxyribose 5'-phosphate)-2'-deoxyribonucleotide-DNA = a 3'-end 2'-deoxyribonucleotide-(2,3-dehydro-2,3-deoxyribose 5'-phosphate)-DNA + a 5'-end 5'-phospho-2'-deoxyribonucleoside-DNA + H(+). Its function is as follows. Involved in base excision repair of DNA damaged by oxidation or by mutagenic agents. Acts as a DNA glycosylase that recognizes and removes damaged bases. Has a preference for oxidized purines, such as 7,8-dihydro-8-oxoguanine (8-oxoG). Has AP (apurinic/apyrimidinic) lyase activity and introduces nicks in the DNA strand. Cleaves the DNA backbone by beta-delta elimination to generate a single-strand break at the site of the removed base with both 3'- and 5'-phosphates. This is Formamidopyrimidine-DNA glycosylase from Prochlorococcus marinus (strain MIT 9211).